Consider the following 368-residue polypeptide: 2-deoxy-scyllo-inosose synthase (368 aa).

Residues Asp42, 72–75, 104–108, 128–129, 139–141, 150–151, and Gln176 contribute to the NAD(+) site; these read EEYK, GLTGN, TT, SIK, and KN. Residue Lys141 is part of the active site. Glu183 is a binding site for Co(2+). Glu243 is a catalytic residue. 2 residues coordinate Co(2+): His246 and His262.

Belongs to the sugar phosphate cyclases superfamily. DOI synthase family. In terms of assembly, was isolated as a heterodimeric enzyme comprising of BtrC and a smaller polypeptide further identified as PdxT by sequence homology. Homodimer in solution. It depends on NAD(+) as a cofactor. Requires Co(2+) as cofactor.

It catalyses the reaction D-glucose 6-phosphate = 2-deoxy-L-scyllo-inosose + phosphate. It functions in the pathway metabolic intermediate biosynthesis; 2-deoxystreptamine biosynthesis; 2-deoxystreptamine from D-glucose 6-phosphate: step 1/4. It participates in antibiotic biosynthesis; butirosin biosynthesis. Its activity is regulated as follows. Strongly inhibited by EDTA, zinc and Cu(2+). Catalyzes the intramolecular carbocycle formation from D-glucose-6-phosphate to 2-deoxy-scyllo-inosose (DOI). This chain is 2-deoxy-scyllo-inosose synthase (btrC), found in Niallia circulans (Bacillus circulans).